Consider the following 479-residue polypeptide: 5-hydroxytryptamine receptor 2B (479 aa).

Residues 1 to 55 (MASSYKMSEQSTTSEHILQKTCDHLILTNRSGLETDSVAEEMKQTVEGQGHTVHW) are Extracellular-facing. A glycan (N-linked (GlcNAc...) asparagine) is linked at Asn29. A helical membrane pass occupies residues 56 to 78 (AALLILAVIIPTIGGNILVILAV). The Cytoplasmic portion of the chain corresponds to 79–89 (ALEKRLQYATN). The chain crosses the membrane as a helical span at residues 90-112 (YFLMSLAIADLLVGLFVMPIALL). The Extracellular portion of the chain corresponds to 113-128 (TIMFEAIWPLPLALCP). Cysteines 127 and 206 form a disulfide. The helical transmembrane segment at 129–150 (AWLFLDVLFSTASIMHLCAISL) threads the bilayer. Ergotamine-binding residues include Asp134 and Thr139. A DRY motif; important for ligand-induced conformation changes motif is present at residues 151-153 (DRY). The Cytoplasmic segment spans residues 151 to 170 (DRYIAIKKPIQANQCNSRAT). A helical transmembrane segment spans residues 171 to 191 (AFIKITVVWLISIGIAIPVPI). The Extracellular portion of the chain corresponds to 192–215 (KGIETDVINPHNVTCELTKDRFGS). Residue Leu208 coordinates ergotamine. The short motif at 211-214 (DRFG) is the [DE]RFG motif; may stabilize a conformation that preferentially activates signaling via beta-arrestin family members element. The helical transmembrane segment at 216–238 (FMVFGSLAAFFAPLTIMVVTYFL) threads the bilayer. Over 239–323 (TIHTLQKKAY…TISNEQRASK (85 aa)) the chain is Cytoplasmic. A helical membrane pass occupies residues 324 to 344 (ALGVVFFLFLLMWCPFFITNL). At 345–359 (TLALCDSCNQTTLKT) the chain is on the extracellular side. Cys349 and Cys352 are oxidised to a cystine. The chain crosses the membrane as a helical span at residues 360–381 (LLEIFVWIGYVSSGVNPLIYTL). The NPxxY motif; important for ligand-induced conformation changes and signaling motif lies at 375–379 (NPLIY). Residues 382-479 (FNKTFREAFG…DKAEEQVSYI (98 aa)) are Cytoplasmic-facing. A lipid anchor (S-palmitoyl cysteine) is attached at Cys396. The PDZ-binding motif lies at 477–479 (SYI).

This sequence belongs to the G-protein coupled receptor 1 family. As to quaternary structure, interacts (via C-terminus) with MPDZ. In terms of tissue distribution, ubiquitous. Detected in intestine, heart, skeletal muscle, testis, urinary bladder, stomach, liver, lung, brain and kidney. Detected in osteoblasts. Detected in the raphe nucleus in the brain, in dorsal root ganglion neurons, the brain stem, cerebellum and spinal cord. Detected in interstitial cells of Cajal in the small intestine.

The protein localises to the cell membrane. It is found in the synapse. Its subcellular location is the synaptosome. Functionally, G-protein coupled receptor for 5-hydroxytryptamine (serotonin). Also functions as a receptor for various ergot alkaloid derivatives and psychoactive substances. Ligand binding causes a conformation change that triggers signaling via guanine nucleotide-binding proteins (G proteins) and modulates the activity of downstream effectors. HTR2B is coupled to G(q)/G(11) G alpha proteins and activates phospholipase C-beta, releasing diacylglycerol (DAG) and inositol 1,4,5-trisphosphate (IP3) second messengers that modulate the activity of phosphatidylinositol 3-kinase and promote the release of Ca(2+) ions from intracellular stores, respectively. Beta-arrestin family members inhibit signaling via G proteins and mediate activation of alternative signaling pathways. Plays a role in the regulation of dopamine and 5-hydroxytryptamine release, 5-hydroxytryptamine uptake and in the regulation of extracellular dopamine and 5-hydroxytryptamine levels, and thereby affects neural activity. May play a role in the perception of pain. Plays a role in the regulation of behavior, including impulsive behavior. Required for normal proliferation of embryonic cardiac myocytes and normal heart development. Protects cardiomyocytes against apoptosis. Plays a role in the adaptation of pulmonary arteries to chronic hypoxia. Plays a role in vasoconstriction. Required for normal osteoblast function and proliferation, and for maintaining normal bone density. Required for normal proliferation of the interstitial cells of Cajal in the intestine. This Mus musculus (Mouse) protein is 5-hydroxytryptamine receptor 2B (Htr2b).